The primary structure comprises 216 residues: Uracil phosphoribosyltransferase (216 aa).

Residues arginine 85, arginine 110, and 135–143 contribute to the 5-phospho-alpha-D-ribose 1-diphosphate site; that span reads DPMVATGYS. Uracil is bound by residues isoleucine 200 and 205-207; that span reads GDA. Residue aspartate 206 coordinates 5-phospho-alpha-D-ribose 1-diphosphate.

Belongs to the UPRTase family. Mg(2+) serves as cofactor.

It catalyses the reaction UMP + diphosphate = 5-phospho-alpha-D-ribose 1-diphosphate + uracil. The protein operates within pyrimidine metabolism; UMP biosynthesis via salvage pathway; UMP from uracil: step 1/1. Allosterically activated by GTP. In terms of biological role, catalyzes the conversion of uracil and 5-phospho-alpha-D-ribose 1-diphosphate (PRPP) to UMP and diphosphate. The sequence is that of Uracil phosphoribosyltransferase from Ralstonia pickettii (strain 12J).